The sequence spans 23 residues: Protein YsaE (23 aa).

The protein is Protein YsaE of Escherichia coli (strain K12).